A 324-amino-acid polypeptide reads, in one-letter code: tRNA U34 carboxymethyltransferase (324 aa).

Residues K92, W106, K111, G131, 153–155, 181–182, M197, Y201, and R316 each bind carboxy-S-adenosyl-L-methionine; these read DPT and IE.

Belongs to the class I-like SAM-binding methyltransferase superfamily. CmoB family. As to quaternary structure, homotetramer.

It catalyses the reaction carboxy-S-adenosyl-L-methionine + 5-hydroxyuridine(34) in tRNA = 5-carboxymethoxyuridine(34) in tRNA + S-adenosyl-L-homocysteine + H(+). Catalyzes carboxymethyl transfer from carboxy-S-adenosyl-L-methionine (Cx-SAM) to 5-hydroxyuridine (ho5U) to form 5-carboxymethoxyuridine (cmo5U) at position 34 in tRNAs. The chain is tRNA U34 carboxymethyltransferase from Methylococcus capsulatus (strain ATCC 33009 / NCIMB 11132 / Bath).